The following is a 167-amino-acid chain: Transcriptional regulator MraZ (167 aa).

2 SpoVT-AbrB domains span residues 8–51 and 92–135; these read ESNH…YGDH and SFPT…NPAT.

Belongs to the MraZ family. In terms of assembly, forms oligomers.

The protein localises to the cytoplasm. Its subcellular location is the nucleoid. This is Transcriptional regulator MraZ from Ruegeria pomeroyi (strain ATCC 700808 / DSM 15171 / DSS-3) (Silicibacter pomeroyi).